Consider the following 288-residue polypeptide: MGNDKRVRKPEWLKISIGANERYTETKRIVESHCLHTICSSGRCPNMGECWGKGTATFMIAGDICTRSCKFCNTQTGRPLPLDPDEPTHVAESIALMKLSHAVITSVDRDDLPDLGAAHWAQTIREIKRLNPETTTEVLIPDFQGRKELVDQVIKACPEIISHNMETVKRISPQVRSAANYHTSLEVIRQIAESGITAKSGIMVGLGETPAEVEELMDDLISVGCKILTIGQYLQPTHKHFPVAAYITPEQFAVYKETGLKKGFEQVESAPLVRSSYHAEKHIRFNNK.

Residues C39, C44, C50, C65, C69, C72, and S276 each coordinate [4Fe-4S] cluster. The Radical SAM core domain occupies 51–265; it reads WGKGTATFMI…KETGLKKGFE (215 aa).

This sequence belongs to the radical SAM superfamily. Lipoyl synthase family. It depends on [4Fe-4S] cluster as a cofactor.

It is found in the cytoplasm. It catalyses the reaction [[Fe-S] cluster scaffold protein carrying a second [4Fe-4S](2+) cluster] + N(6)-octanoyl-L-lysyl-[protein] + 2 oxidized [2Fe-2S]-[ferredoxin] + 2 S-adenosyl-L-methionine + 4 H(+) = [[Fe-S] cluster scaffold protein] + N(6)-[(R)-dihydrolipoyl]-L-lysyl-[protein] + 4 Fe(3+) + 2 hydrogen sulfide + 2 5'-deoxyadenosine + 2 L-methionine + 2 reduced [2Fe-2S]-[ferredoxin]. The protein operates within protein modification; protein lipoylation via endogenous pathway; protein N(6)-(lipoyl)lysine from octanoyl-[acyl-carrier-protein]: step 2/2. Its function is as follows. Catalyzes the radical-mediated insertion of two sulfur atoms into the C-6 and C-8 positions of the octanoyl moiety bound to the lipoyl domains of lipoate-dependent enzymes, thereby converting the octanoylated domains into lipoylated derivatives. This chain is Lipoyl synthase, found in Bacteroides fragilis (strain ATCC 25285 / DSM 2151 / CCUG 4856 / JCM 11019 / LMG 10263 / NCTC 9343 / Onslow / VPI 2553 / EN-2).